The sequence spans 119 residues: MIVGIGIDIIELNRIEKMLDGKLKFMERILTERERGVAEGLKGSRLTEFVAGRFAAKEAYSKAVGTGIGKEVSFLDIEVRNDDRGKPIIITNTEHIVHLSISHSKEFAVAQVVLESSSR.

Aspartate 8 and glutamate 58 together coordinate Mg(2+).

It belongs to the P-Pant transferase superfamily. AcpS family. It depends on Mg(2+) as a cofactor.

The protein localises to the cytoplasm. It catalyses the reaction apo-[ACP] + CoA = holo-[ACP] + adenosine 3',5'-bisphosphate + H(+). Transfers the 4'-phosphopantetheine moiety from coenzyme A to a Ser of acyl-carrier-protein. This is Holo-[acyl-carrier-protein] synthase from Bacillus mycoides (strain KBAB4) (Bacillus weihenstephanensis).